A 130-amino-acid polypeptide reads, in one-letter code: RutC family protein in leuC 5'region (130 aa).

Belongs to the RutC family.

The sequence is that of RutC family protein in leuC 5'region from Leuconostoc mesenteroides subsp. cremoris.